Reading from the N-terminus, the 121-residue chain is UPF0344 protein BCE_1257 (121 aa).

4 helical membrane-spanning segments follow: residues 6 to 26 (ITAW…YSAG), 38 to 58 (LMYI…VKTA), 65 to 85 (WYGL…MVLV), and 92 to 112 (PTGA…YLGL).

This sequence belongs to the UPF0344 family.

Its subcellular location is the cell membrane. The protein is UPF0344 protein BCE_1257 of Bacillus cereus (strain ATCC 10987 / NRS 248).